A 129-amino-acid polypeptide reads, in one-letter code: Virion-associated protein (129 aa).

2 coiled-coil regions span residues 1 to 31 (MANL…ILEL) and 38 to 59 (IKES…LIND). The capsid binding stretch occupies residues 122-129 (PAGWPNQF).

It belongs to the caulimovirus ORF III family. Homotetramer, through coiled-coil domain. Homotrimer when bound on icosehadral capsid. Interacts with capsid protein, and with movement protein.

The protein resides in the virion. It is found in the host cell junction. The protein localises to the host plasmodesma. Its function is as follows. Plays a role in virus cell-to-cell and plant-to-plant transmission. Interacts with virion icosahedral capsid and movement protein, thereby facilitating virion cell-to-cell transmission through plasmodesmata opened by viral movement protein. Also interacts with aphid transmission factor, attaching the virion to aphid stylet when the animal feeds on an virus infected plant. Aphid saliva may later detach the virion, inducing release of infectious particles when the animal feeds on a new plant. The chain is Virion-associated protein from Cauliflower mosaic virus (strain Strasbourg) (CaMV).